The sequence spans 503 residues: 2-(3-amino-3-carboxypropyl)histidine synthase subunit 2 (503 aa).

Cys-93, Cys-114, and Cys-334 together coordinate [4Fe-4S] cluster. A disordered region spans residues 464-503 (GLDSVDEGEGPSKLYEGQSGIAKGYVGEGSKEKIQRDFGK). Residues 492-503 (GSKEKIQRDFGK) show a composition bias toward basic and acidic residues.

This sequence belongs to the DPH1/DPH2 family. DPH2 subfamily. Component of the 2-(3-amino-3-carboxypropyl)histidine synthase complex composed of dph1, dph2, dph3 and a NADH-dependent reductase, predominantly cbr1. It depends on [4Fe-4S] cluster as a cofactor.

The protein localises to the cytoplasm. It participates in protein modification; peptidyl-diphthamide biosynthesis. In terms of biological role, required for the first step of diphthamide biosynthesis, a post-translational modification of histidine which occurs in elongation factor 2. Dph1 and dph2 transfer a 3-amino-3-carboxypropyl (ACP) group from S-adenosyl-L-methionine (SAM) to a histidine residue, the reaction is assisted by a reduction system comprising dph3 and a NADH-dependent reductase, predominantly cbr1. Facilitates the reduction of the catalytic iron-sulfur cluster found in the dph1 subunit. This chain is 2-(3-amino-3-carboxypropyl)histidine synthase subunit 2, found in Schizosaccharomyces pombe (strain 972 / ATCC 24843) (Fission yeast).